A 283-amino-acid chain; its full sequence is Protein/nucleic acid deglycase HchA (283 aa).

Residues His86, Glu91, and His123 each coordinate Zn(2+). Cys185 functions as the Nucleophile in the catalytic mechanism.

It belongs to the peptidase C56 family. HchA subfamily. As to quaternary structure, homodimer.

It is found in the cytoplasm. It carries out the reaction N(omega)-(1-hydroxy-2-oxopropyl)-L-arginyl-[protein] + H2O = lactate + L-arginyl-[protein] + H(+). It catalyses the reaction N(6)-(1-hydroxy-2-oxopropyl)-L-lysyl-[protein] + H2O = lactate + L-lysyl-[protein] + H(+). The catalysed reaction is S-(1-hydroxy-2-oxopropyl)-L-cysteinyl-[protein] + H2O = lactate + L-cysteinyl-[protein] + H(+). The enzyme catalyses N(omega)-(1-hydroxy-2-oxoethyl)-L-arginyl-[protein] + H2O = L-arginyl-[protein] + glycolate + H(+). It carries out the reaction N(6)-(1-hydroxy-2-oxoethyl)-L-lysyl-[protein] + H2O = glycolate + L-lysyl-[protein] + H(+). It catalyses the reaction S-(1-hydroxy-2-oxoethyl)-L-cysteinyl-[protein] + H2O = glycolate + L-cysteinyl-[protein] + H(+). The catalysed reaction is N(2)-(1-hydroxy-2-oxopropyl)-dGTP + H2O = lactate + dGTP + H(+). The enzyme catalyses N(2)-(1-hydroxy-2-oxopropyl)-GTP + H2O = lactate + GTP + H(+). It carries out the reaction N(2)-(1-hydroxy-2-oxopropyl)-GDP + H2O = lactate + GDP + H(+). It catalyses the reaction N(2)-(1-hydroxy-2-oxopropyl)-GMP + H2O = lactate + GMP + H(+). The catalysed reaction is N(2)-(1-hydroxy-2-oxoethyl)-dGTP + H2O = dGTP + glycolate + H(+). The enzyme catalyses N(2)-(1-hydroxy-2-oxoethyl)-GTP + H2O = glycolate + GTP + H(+). It carries out the reaction N(2)-(1-hydroxy-2-oxoethyl)-GDP + H2O = glycolate + GDP + H(+). It catalyses the reaction N(2)-(1-hydroxy-2-oxoethyl)-GMP + H2O = glycolate + GMP + H(+). The catalysed reaction is an N(2)-(1-hydroxy-2-oxopropyl)-guanosine in RNA + H2O = a guanosine in RNA + lactate + H(+). The enzyme catalyses an N(2)-(1-hydroxy-2-oxopropyl)-2'-deoxyguanosine in DNA + H2O = a 2'-deoxyguanosine in DNA + lactate + H(+). It carries out the reaction an N(2)-(1-hydroxy-2-oxoethyl)-guanosine in RNA + H2O = a guanosine in RNA + glycolate + H(+). It catalyses the reaction an N(2)-(1-hydroxy-2-oxoethyl)-2'-deoxyguanosine in DNA + H2O = a 2'-deoxyguanosine in DNA + glycolate + H(+). Its function is as follows. Protein and nucleotide deglycase that catalyzes the deglycation of the Maillard adducts formed between amino groups of proteins or nucleotides and reactive carbonyl groups of glyoxals. Thus, functions as a protein deglycase that repairs methylglyoxal- and glyoxal-glycated proteins, and releases repaired proteins and lactate or glycolate, respectively. Deglycates cysteine, arginine and lysine residues in proteins, and thus reactivates these proteins by reversing glycation by glyoxals. Acts on early glycation intermediates (hemithioacetals and aminocarbinols), preventing the formation of Schiff bases and advanced glycation endproducts (AGE). Also functions as a nucleotide deglycase able to repair glycated guanine in the free nucleotide pool (GTP, GDP, GMP, dGTP) and in DNA and RNA. Is thus involved in a major nucleotide repair system named guanine glycation repair (GG repair), dedicated to reversing methylglyoxal and glyoxal damage via nucleotide sanitization and direct nucleic acid repair. Plays an important role in protecting cells from carbonyl stress. The sequence is that of Protein/nucleic acid deglycase HchA from Escherichia coli O8 (strain IAI1).